We begin with the raw amino-acid sequence, 151 residues long: UPF0208 membrane protein CKO_00500 (151 aa).

2 helical membrane passes run 46–65 and 69–91; these read YAIR…QIAL and LGPA…WWLG.

Belongs to the UPF0208 family.

It localises to the cell inner membrane. The protein is UPF0208 membrane protein CKO_00500 of Citrobacter koseri (strain ATCC BAA-895 / CDC 4225-83 / SGSC4696).